Reading from the N-terminus, the 289-residue chain is MELLPPPLRDMEVTEGSLCAFPTPDDFYDDPCFNTSDMSFFEDLDPRLVHVTLLKPEEPHHNEDEHVRAPSGHHQAGRCLLWACKACKRKTTNADRRKAATMRERRRLSKVNEAFETLKRYTSTNPNQRLPKVEILRNAIRYIESLQALLHDQDEAFYPVLEHYSGDSDASSPRSNCSDGMMDYNSPPCGSRRRNSYDSSFYSDSPNDSRLGKSSVISSLDCLSSIVERISTQSPSCPVPTAVDSGSEGSPCSPLQGETLSERVITIPSPSNTCTQLSQDPSSTIYHVL.

Residues D95–L146 form the bHLH domain. The tract at residues S165 to G212 is disordered. Composition is skewed to polar residues over residues S168 to S178 and Y197 to D208.

In terms of assembly, efficient DNA binding requires dimerization with another bHLH protein.

The protein resides in the nucleus. Functionally, may act as a transcriptional activator that promotes transcription of muscle-specific target genes and plays a role in muscle differentiation. In Xenopus laevis (African clawed frog), this protein is Myoblast determination protein 1 homolog A (myod1-a).